The chain runs to 39 residues: SPbeta prophage-derived uncharacterized protein YorT (39 aa).

In Bacillus subtilis (strain 168), this protein is SPbeta prophage-derived uncharacterized protein YorT (yorT).